Reading from the N-terminus, the 474-residue chain is 3-isopropylmalate dehydratase large subunit (474 aa).

3 residues coordinate [4Fe-4S] cluster: Cys353, Cys414, and Cys417.

The protein belongs to the aconitase/IPM isomerase family. LeuC type 1 subfamily. As to quaternary structure, heterodimer of LeuC and LeuD. [4Fe-4S] cluster serves as cofactor.

It catalyses the reaction (2R,3S)-3-isopropylmalate = (2S)-2-isopropylmalate. The protein operates within amino-acid biosynthesis; L-leucine biosynthesis; L-leucine from 3-methyl-2-oxobutanoate: step 2/4. Functionally, catalyzes the isomerization between 2-isopropylmalate and 3-isopropylmalate, via the formation of 2-isopropylmaleate. In Xylella fastidiosa (strain M12), this protein is 3-isopropylmalate dehydratase large subunit.